The primary structure comprises 385 residues: Polyketide synthase 1 (385 aa).

Residue Cys157 is part of the active site.

Belongs to the thiolase-like superfamily. Chalcone/stilbene synthases family. Expressed in glandular trichomes.

It localises to the cytoplasm. Polyketide synthase responsible for the biosynthesis of secondary metabolites. The protein is Polyketide synthase 1 (PKSG1) of Cannabis sativa (Hemp).